A 660-amino-acid chain; its full sequence is MVHSEAKMTRPDSASASKQQLLNGNADIQETNQKRSIEKNLCSQYEEKVRPCIDLIDSLRALGVEQDLALPAIAVIGDQSSGKSSVLEALSGVALPRGSGIVTRCPLVLKLKRLVKEDEWKGKVSYRDIEVEISNALDVEEQVRKAQNVLAGEGVGISQELVTLEVSSPHVPDLTLIDLPGITRVAVGNQPADIGRQIKTLIRKYIQRQETINLVVVPSNVDIATTEALSMAQEVDPEGDRTIGILTKPDLVDKGTEEQVVDVVRNLICHLKKGYMIVKCRGQQDIQDRLSLAEALQREKAFFEENPYFRGLLEEGRASVPCLAERLTTELITHISKSLPLLENQIKESYQNLSDELQKYGTDIPEDETEKTFFLIVKITTFNQNITSFVQGEELVGPNDTRLFNKIRQEFQKWSGVIENNFRKGGEAIRRQIWTFENQYRGRELPGFVNYRTFETIIKQQIQLLEEPAIDMLHRISDLVRDTFTKVSEKNFSEFFNLHRTTKSKLEDIKLEQENEAEKSIRLHFQMEKIVYCQDHVYRGTLQKVRENEMEEEKKKKTINVWGQNTSTESSMAEILEHLNAYQHEAGNRLSTHIPLIIQFFVLQTFGQQLQKSMLQLLQDRDTYDWLLKERNDTCDKRKFLKERLARLAQARRRLAKFPG.

M1 carries the post-translational modification N-acetylmethionine. Positions 1–10 (MVHSEAKMTR) are enriched in basic and acidic residues. Residues 1 to 29 (MVHSEAKMTRPDSASASKQQLLNGNADIQ) form a disordered region. Positions 12 to 29 (DSASASKQQLLNGNADIQ) are enriched in polar residues. One can recognise a Dynamin-type G domain in the interval 67-340 (DLALPAIAVI…LITHISKSLP (274 aa)). The segment at 77-84 (GDQSSGKS) is G1 motif. A GTP-binding site is contributed by 77–84 (GDQSSGKS). The tract at residues 102 to 104 (VTR) is G2 motif. Residues 178–181 (DLPG) are G3 motif. GTP is bound by residues 178-182 (DLPGI) and 247-250 (TKPD). Positions 247–250 (TKPD) are G4 motif. Residues 279–282 (KCRG) are G5 motif. The tract at residues 341-366 (LLENQIKESYQNLSDELQKYGTDIPE) is bundle signaling element (BSE). The middle domain stretch occupies residues 366–533 (EDETEKTFFL…HFQMEKIVYC (168 aa)). Positions 367-630 (DETEKTFFLI…RDTYDWLLKE (264 aa)) are stalk. Residues 554–557 (KKKK) are critical for lipid-binding. One can recognise a GED domain in the interval 572 to 660 (MAEILEHLNA…ARRRLAKFPG (89 aa)).

This sequence belongs to the TRAFAC class dynamin-like GTPase superfamily. Dynamin/Fzo/YdjA family. Homooligomer. Oligomerizes into multimeric filamentous or ring-like structures by virtue of its stalk domain. Oligomerization is critical for GTPase activity, protein stability, and recognition of viral target structures. Interacts with TRPC1, TRPC3, TRPC4, TRPC5, TRPC6 and TRPC7. Interacts with HSPA5. Interacts with TUBB/TUBB5. Interacts with DDX39A and DDX39B. ISGylated.

The protein resides in the cytoplasm. Its subcellular location is the endoplasmic reticulum membrane. The protein localises to the perinuclear region. In terms of biological role, interferon-induced dynamin-like GTPase with antiviral activity. In Equus caballus (Horse), this protein is Interferon-induced GTP-binding protein Mx1 (MX1).